Consider the following 933-residue polypeptide: Phosphoenolpyruvate carboxylase (933 aa).

Catalysis depends on residues H164 and K595.

The protein belongs to the PEPCase type 1 family. The cofactor is Mg(2+).

It catalyses the reaction oxaloacetate + phosphate = phosphoenolpyruvate + hydrogencarbonate. Its function is as follows. Forms oxaloacetate, a four-carbon dicarboxylic acid source for the tricarboxylic acid cycle. The polypeptide is Phosphoenolpyruvate carboxylase (Rhodopseudomonas palustris (strain HaA2)).